Consider the following 371-residue polypeptide: tRNA/tmRNA (uracil-C(5))-methyltransferase (371 aa).

S-adenosyl-L-methionine is bound by residues glutamine 194, tyrosine 223, asparagine 228, glutamate 244, and aspartate 304. Residue cysteine 329 is the Nucleophile of the active site. Glutamate 363 serves as the catalytic Proton acceptor.

The protein belongs to the class I-like SAM-binding methyltransferase superfamily. RNA M5U methyltransferase family. TrmA subfamily.

The enzyme catalyses uridine(54) in tRNA + S-adenosyl-L-methionine = 5-methyluridine(54) in tRNA + S-adenosyl-L-homocysteine + H(+). It carries out the reaction uridine(341) in tmRNA + S-adenosyl-L-methionine = 5-methyluridine(341) in tmRNA + S-adenosyl-L-homocysteine + H(+). In terms of biological role, dual-specificity methyltransferase that catalyzes the formation of 5-methyluridine at position 54 (m5U54) in all tRNAs, and that of position 341 (m5U341) in tmRNA (transfer-mRNA). This is tRNA/tmRNA (uracil-C(5))-methyltransferase from Sulfurovum sp. (strain NBC37-1).